The following is a 254-amino-acid chain: MSLCLGHIFSRSRSPLTPERRESLRRLQETLGVKFRDPTALDQALSHRSLFSSKEDHCGVRHNERMEFLGDAVLGAVAAACLYRALPDSHEGDLAKTKAVLVSTDTLSDIALSLRIDHYLLLGKGEELSGGRHKKAILADATEAVIGALFLDSGFKAAERFVLRLLLPRVRPIREKNLHHDYKSTLQVLAHQRYRSKPEYTVVKRTGPDHSVRFWVDVTVGDARFGPGYGTSKKSAEQCAARLAWEQLSGTLRE.

The RNase III domain maps to Leu24–Gly154. Glu67 contributes to the Mg(2+) binding site. Asp71 is a catalytic residue. Positions 140 and 143 each coordinate Mg(2+). The active site involves Glu143. In terms of domain architecture, DRBM spans Asp181–Gly250.

It belongs to the ribonuclease III family. In terms of assembly, homodimer. Mg(2+) is required as a cofactor.

Its subcellular location is the cytoplasm. The enzyme catalyses Endonucleolytic cleavage to 5'-phosphomonoester.. Its function is as follows. Digests double-stranded RNA. Involved in the processing of primary rRNA transcript to yield the immediate precursors to the large and small rRNAs (23S and 16S). Processes some mRNAs, and tRNAs when they are encoded in the rRNA operon. Processes pre-crRNA and tracrRNA of type II CRISPR loci if present in the organism. This chain is Ribonuclease 3, found in Treponema pallidum (strain Nichols).